A 165-amino-acid chain; its full sequence is Nucleoside-triphosphatase THEP1 (165 aa).

ATP-binding positions include 7–14 (GRPGVGKT) and 93–100 (LVIIDEVG).

It belongs to the THEP1 NTPase family.

It catalyses the reaction a ribonucleoside 5'-triphosphate + H2O = a ribonucleoside 5'-diphosphate + phosphate + H(+). In terms of biological role, has nucleotide phosphatase activity towards ATP, GTP, CTP, TTP and UTP. May hydrolyze nucleoside diphosphates with lower efficiency. The chain is Nucleoside-triphosphatase THEP1 from Archaeoglobus fulgidus (strain ATCC 49558 / DSM 4304 / JCM 9628 / NBRC 100126 / VC-16).